Here is a 274-residue protein sequence, read N- to C-terminus: Thiazole synthase (274 aa).

K111 functions as the Schiff-base intermediate with DXP in the catalytic mechanism. 1-deoxy-D-xylulose 5-phosphate contacts are provided by residues G172, 198-199, and 220-221; these read AG and NT.

It belongs to the ThiG family. In terms of assembly, homotetramer. Forms heterodimers with either ThiH or ThiS.

The protein localises to the cytoplasm. The catalysed reaction is [ThiS sulfur-carrier protein]-C-terminal-Gly-aminoethanethioate + 2-iminoacetate + 1-deoxy-D-xylulose 5-phosphate = [ThiS sulfur-carrier protein]-C-terminal Gly-Gly + 2-[(2R,5Z)-2-carboxy-4-methylthiazol-5(2H)-ylidene]ethyl phosphate + 2 H2O + H(+). Its pathway is cofactor biosynthesis; thiamine diphosphate biosynthesis. In terms of biological role, catalyzes the rearrangement of 1-deoxy-D-xylulose 5-phosphate (DXP) to produce the thiazole phosphate moiety of thiamine. Sulfur is provided by the thiocarboxylate moiety of the carrier protein ThiS. In vitro, sulfur can be provided by H(2)S. This is Thiazole synthase from Gloeobacter violaceus (strain ATCC 29082 / PCC 7421).